The primary structure comprises 711 residues: MSEDAIGQQVPAAQEAAAGAEPNSAARERHATLSRELTEHQYRYYVLDAPTISDAAFDEQLRELAALEAEFPALRTPDSPTQRVGGAFSTDFTPVAHAERMMSLDNAFSDEELAAWAERVERDAGGPVPYLCELKVDGLAINLTYERGRLVRAATRGDGRTGEDVTANVRSIQDVPGELTPSAEFPEIPDLLEVRGEIYFPVAGFADLNAGLVEQGRAPFANPRNAAAGSLRQKDPRITASRPLRLVVHGFGARRGWAPSTQSESYAALRTWGLPTSDRWRVVPGLAGVAEYVAHYAAHRHDVEHEIDGVVVKVDPVAIQGRLGSTSRAPRWAIAFKYPPEEVNTRLLDIDVNVGRTGRVTPFAVLEPVRVAGSTVALATLHNAREVERKGVLIGDTVVIRKAGDVIPEVLGPVVELRPPEARSFVMPSRCPCCGTPLAPAKEGDIDIRCPNTRSCPAQLRERVFHLAGRGAFDIEVLGYKGAAALLDAEIITDEGDLFTLDTAQLARSPFFVNKDGSLGSNAVKLLENLTVAKERELWRVLVALSIRHVGPTAAQALARHFRSVEAIDQAGEEELSAVDGVGPTIAASVREWFAVAWHREVVRKWAEAGVRMAEEAVAQGPRPLEGVTVVVTGTLAGYSRDQAAEAIQSRGGKVTGSVSKKTAFVVVGDNPGTKAEKAAGLKVPVLDEEGFQVLLDAGPEAARAVARVEG.

The interval 1 to 29 is disordered; that stretch reads MSEDAIGQQVPAAQEAAAGAEPNSAARER. Positions 12-25 are enriched in low complexity; sequence AAQEAAAGAEPNSA. NAD(+)-binding positions include 54-58, 103-104, and E133; these read DAAFD and SL. K135 functions as the N6-AMP-lysine intermediate in the catalytic mechanism. 4 residues coordinate NAD(+): R156, E197, K313, and K337. Residues C431, C434, C450, and C456 each coordinate Zn(2+). One can recognise a BRCT domain in the interval 620–709; sequence QGPRPLEGVT…PEAARAVARV (90 aa).

This sequence belongs to the NAD-dependent DNA ligase family. LigA subfamily. Mg(2+) is required as a cofactor. It depends on Mn(2+) as a cofactor.

The catalysed reaction is NAD(+) + (deoxyribonucleotide)n-3'-hydroxyl + 5'-phospho-(deoxyribonucleotide)m = (deoxyribonucleotide)n+m + AMP + beta-nicotinamide D-nucleotide.. In terms of biological role, DNA ligase that catalyzes the formation of phosphodiester linkages between 5'-phosphoryl and 3'-hydroxyl groups in double-stranded DNA using NAD as a coenzyme and as the energy source for the reaction. It is essential for DNA replication and repair of damaged DNA. This chain is DNA ligase, found in Salinispora tropica (strain ATCC BAA-916 / DSM 44818 / JCM 13857 / NBRC 105044 / CNB-440).